The chain runs to 350 residues: Enoyl-[acyl-carrier-protein] reductase, mitochondrial (350 aa).

Residues 1-12 (MWLGLRLFHRPF) constitute a mitochondrion transit peptide. The Proton donor role is filled by Tyr-68. NADP(+) contacts are provided by residues Asn-141, 167–170 (NSGV), 190–192 (RDR), 259–262 (YGGM), 284–286 (FWV), and Lys-345.

Belongs to the zinc-containing alcohol dehydrogenase family. Quinone oxidoreductase subfamily. As to quaternary structure, homodimer. In terms of tissue distribution, expressed in the developing pronephros.

The protein localises to the mitochondrion. It catalyses the reaction a 2,3-saturated acyl-[ACP] + NADP(+) = a (2E)-enoyl-[ACP] + NADPH + H(+). Its function is as follows. Catalyzes the NADPH-dependent reduction of trans-2-enoyl thioesters in mitochondrial fatty acid synthesis (fatty acid synthesis type II). Fatty acid chain elongation in mitochondria uses acyl carrier protein (ACP) as an acyl group carrier, but the enzyme accepts both ACP and CoA thioesters as substrates in vitro. May provide the octanoyl chain used for lipoic acid biosynthesis, regulating protein lipoylation and mitochondrial respiratory activity. Involved in iron homeostasis; affecting Fe-S cluster assembly and ceramide metabolism. Required for proper morphology and bioenergetic functions of mitochondria. Required for maintenance of neurons. Functions in pronephros development, regulating late differentiation of all pronephric tubule segments. In Xenopus tropicalis (Western clawed frog), this protein is Enoyl-[acyl-carrier-protein] reductase, mitochondrial (mecr).